A 322-amino-acid chain; its full sequence is Undecaprenyl-phosphate 4-deoxy-4-formamido-L-arabinose transferase (322 aa).

The Cytoplasmic segment spans residues 1–235 (MFEIHPVKKV…TCLTTTPLRM (235 aa)). A helical transmembrane segment spans residues 236–256 (LSLLGSIIAIGGFSIAVLLVI). Residues 257–269 (LRLTFGPQWAAEG) are Periplasmic-facing. The helical transmembrane segment at 270-290 (VFMLFAVLFTFIGAQFIGMGL) threads the bilayer. Residues 291 to 322 (LGEYIGRIYTDVRARPRYFVQQVIRPSSKENE) are Cytoplasmic-facing.

This sequence belongs to the glycosyltransferase 2 family.

Its subcellular location is the cell inner membrane. It catalyses the reaction UDP-4-deoxy-4-formamido-beta-L-arabinose + di-trans,octa-cis-undecaprenyl phosphate = 4-deoxy-4-formamido-alpha-L-arabinopyranosyl di-trans,octa-cis-undecaprenyl phosphate + UDP. The protein operates within glycolipid biosynthesis; 4-amino-4-deoxy-alpha-L-arabinose undecaprenyl phosphate biosynthesis; 4-amino-4-deoxy-alpha-L-arabinose undecaprenyl phosphate from UDP-4-deoxy-4-formamido-beta-L-arabinose and undecaprenyl phosphate: step 1/2. It functions in the pathway bacterial outer membrane biogenesis; lipopolysaccharide biosynthesis. Functionally, catalyzes the transfer of 4-deoxy-4-formamido-L-arabinose from UDP to undecaprenyl phosphate. The modified arabinose is attached to lipid A and is required for resistance to polymyxin and cationic antimicrobial peptides. This Shigella flexneri protein is Undecaprenyl-phosphate 4-deoxy-4-formamido-L-arabinose transferase.